The sequence spans 296 residues: 33 kDa chaperonin (296 aa).

2 disulfides stabilise this stretch: C238-C240 and C271-C274.

It belongs to the HSP33 family. Under oxidizing conditions two disulfide bonds are formed involving the reactive cysteines. Under reducing conditions zinc is bound to the reactive cysteines and the protein is inactive.

Its subcellular location is the cytoplasm. Its function is as follows. Redox regulated molecular chaperone. Protects both thermally unfolding and oxidatively damaged proteins from irreversible aggregation. Plays an important role in the bacterial defense system toward oxidative stress. The polypeptide is 33 kDa chaperonin (Clostridium botulinum (strain ATCC 19397 / Type A)).